We begin with the raw amino-acid sequence, 230 residues long: CRP-like protein Clp (230 aa).

18–139 (PSLTLDAGTI…APRILYAIGV (122 aa)) lines the a nucleoside 3',5'-cyclic phosphate pocket. The HTH crp-type domain maps to 158-230 (LDVTDRIVRT…GKTVVLYGTR (73 aa)). The H-T-H motif DNA-binding region spans 190–209 (RQELARLVGCSREMAGRVLK).

In terms of assembly, homodimer.

It is found in the cytoplasm. Allosterically inhibited by cyclic di-GMP (c-di-GMP), which binds to Clp and abolishes its ability to bind its target gene promoter. Its function is as follows. Global transcriptional regulator that regulates virulence factors production by activating or repressing the expression of a large set of genes in diffusible signal factor (DSF) pathway. This Xanthomonas campestris pv. campestris (strain 8004) protein is CRP-like protein Clp (clp).